The sequence spans 83 residues: Large ribosomal subunit protein bL31B (83 aa).

It belongs to the bacterial ribosomal protein bL31 family. Type B subfamily. In terms of assembly, part of the 50S ribosomal subunit.

In Bacteroides fragilis (strain ATCC 25285 / DSM 2151 / CCUG 4856 / JCM 11019 / LMG 10263 / NCTC 9343 / Onslow / VPI 2553 / EN-2), this protein is Large ribosomal subunit protein bL31B.